The primary structure comprises 345 residues: Small ribosomal subunit protein mS45 (345 aa).

A mitochondrion-targeting transit peptide spans 1-27; the sequence is MSYGLTGTSSKLRGTSSIFSWTQVRHF.

Belongs to the mitochondrion-specific ribosomal protein mS45 family. As to quaternary structure, component of the mitochondrial small ribosomal subunit (mt-SSU). Mature yeast 74S mitochondrial ribosomes consist of a small (37S) and a large (54S) subunit. The 37S small subunit contains a 15S ribosomal RNA (15S mt-rRNA) and 34 different proteins. The 54S large subunit contains a 21S rRNA (21S mt-rRNA) and 46 different proteins.

The protein resides in the mitochondrion. In terms of biological role, component of the mitochondrial ribosome (mitoribosome), a dedicated translation machinery responsible for the synthesis of mitochondrial genome-encoded proteins, including at least some of the essential transmembrane subunits of the mitochondrial respiratory chain. The mitoribosomes are attached to the mitochondrial inner membrane and translation products are cotranslationally integrated into the membrane. The polypeptide is Small ribosomal subunit protein mS45 (MRPS35) (Saccharomyces cerevisiae (strain ATCC 204508 / S288c) (Baker's yeast)).